Reading from the N-terminus, the 464-residue chain is Argininosuccinate lyase (464 aa).

This sequence belongs to the lyase 1 family. Argininosuccinate lyase subfamily.

The protein localises to the cytoplasm. The enzyme catalyses 2-(N(omega)-L-arginino)succinate = fumarate + L-arginine. Its pathway is amino-acid biosynthesis; L-arginine biosynthesis; L-arginine from L-ornithine and carbamoyl phosphate: step 3/3. The protein is Argininosuccinate lyase of Pseudomonas aeruginosa (strain ATCC 15692 / DSM 22644 / CIP 104116 / JCM 14847 / LMG 12228 / 1C / PRS 101 / PAO1).